Here is a 117-residue protein sequence, read N- to C-terminus: Appetite-regulating hormone (117 aa).

The first 23 residues, 1–23, serve as a signal peptide directing secretion; it reads MPSPGTVCSLLLLGMLWLDLAMA. The O-decanoyl serine; alternate moiety is linked to residue S26. Residue S26 is the site of O-hexanoyl serine; alternate attachment. A lipid anchor (O-octanoyl serine; alternate) is attached at S26. The tract at residues 29 to 67 is disordered; the sequence is SPEHQRAQQRKESKKPPAKLQPRALGGWLRPEDGDQAEG. Residues 31 to 43 are compositionally biased toward basic and acidic residues; the sequence is EHQRAQQRKESKK. Residues 52-75 constitute a propeptide, removed in mature form; sequence ALGGWLRPEDGDQAEGAEDELEIQ. Leucine amide is present on L98. Residues 99–117 constitute a propeptide, removed in mature form; the sequence is GKFLQDILWEEAKEAPADK.

It belongs to the motilin family. Post-translationally, O-octanoylated by GOAT/MBOAT4. O-octanoylation is essential for ghrelin activity. Amidation of Leu-98 is essential for obestatin activity.

The protein resides in the secreted. Its function is as follows. Ghrelin is the ligand for growth hormone secretagogue receptor type 1 (GHSR). Induces the release of growth hormone from the pituitary. Has an appetite-stimulating effect, induces adiposity and stimulates gastric acid secretion. Involved in growth regulation. Functionally, obestatin may be the ligand for GPR39. May have an appetite-reducing effect resulting in decreased food intake. May reduce gastric emptying activity and jejunal motility. In Papio hamadryas (Hamadryas baboon), this protein is Appetite-regulating hormone (GHRL).